A 288-amino-acid polypeptide reads, in one-letter code: L-threonine kinase (288 aa).

80–90 contributes to the ATP binding site; the sequence is PIAKGMASSTA.

The protein belongs to the GHMP kinase family. PduX subfamily.

It localises to the cytoplasm. The enzyme catalyses L-threonine + ATP = O-phospho-L-threonine + ADP + H(+). The protein operates within cofactor biosynthesis; adenosylcobalamin biosynthesis. It participates in polyol metabolism; 1,2-propanediol degradation. Its function is as follows. L-threonine kinase that catalyzes the conversion of L-threonine to L-threonine-O-3-phosphate. Involved in the de novo synthesis of adenosylcobalamin (coenzyme B12) and the assimilation of cobyric acid. In terms of biological role, expression of a cosmid containing the full 21-gene pdu operon in E.coli allows E.coli to grow on 1,2-propanediol (1,2-PD) with the appearance of bacterial microcompartments (BMC) in its cytoplasm. Functionally, the 1,2-PD-specific bacterial microcompartment (BMC) concentrates low levels of 1,2-PD catabolic enzymes, concentrates volatile reaction intermediates thus enhancing pathway flux and keeps the level of toxic, mutagenic propionaldehyde low. This gene probably benefits from its induction via the Pdu promoter, rather than a physical interaction with the BMC. In Citrobacter freundii, this protein is L-threonine kinase.